The primary structure comprises 309 residues: tRNA pseudouridine synthase B (309 aa).

Asp-39 functions as the Nucleophile in the catalytic mechanism. In terms of domain architecture, PUA spans Leu-229 to Phe-306.

The protein belongs to the pseudouridine synthase TruB family. Type 1 subfamily.

The enzyme catalyses uridine(55) in tRNA = pseudouridine(55) in tRNA. Functionally, responsible for synthesis of pseudouridine from uracil-55 in the psi GC loop of transfer RNAs. This chain is tRNA pseudouridine synthase B, found in Thermotoga maritima (strain ATCC 43589 / DSM 3109 / JCM 10099 / NBRC 100826 / MSB8).